Consider the following 343-residue polypeptide: MPLDDRKKKILYAVITDYIMTAEPIGSRTIAKKYNIGLSSATIRNEMADLEEMGYLEQPHTSAGRIPSDKGYRFYVDSILRNYINNEPPISYNTREEIIAEFDEIVKKYAKILANITHHTTVAKMPKLNPDRIKRIQLIPVASNKMIFLVVTDTGIVKNYLLNLCQNVDRTIFEFLNNLLNEKIAGKNEKDVFEFLQQDLRHMLGEMVFIADELINTILLSLKQLQETDIYADGTSHILDFPEYKDLSKAKNFFNLLDNKSLLNEILEPEVDFIDVRIGSENKFEEMKDLSVIKTTYKINGRVVGTIGIIGPTRMDYRKLINEINVMTKELSNLLSNIYNDEI.

It belongs to the HrcA family.

Functionally, negative regulator of class I heat shock genes (grpE-dnaK-dnaJ and groELS operons). Prevents heat-shock induction of these operons. This chain is Heat-inducible transcription repressor HrcA, found in Thermoanaerobacter sp. (strain X514).